A 283-amino-acid polypeptide reads, in one-letter code: MEMO1 family protein DKAM_1357 (283 aa).

It belongs to the MEMO1 family.

This Desulfurococcus amylolyticus (strain DSM 18924 / JCM 16383 / VKM B-2413 / 1221n) (Desulfurococcus kamchatkensis) protein is MEMO1 family protein DKAM_1357.